We begin with the raw amino-acid sequence, 285 residues long: Bifunctional protein FolD (285 aa).

NADP(+) is bound by residues glycine 164 to serine 166, isoleucine 189, and isoleucine 230.

The protein belongs to the tetrahydrofolate dehydrogenase/cyclohydrolase family. As to quaternary structure, homodimer.

It carries out the reaction (6R)-5,10-methylene-5,6,7,8-tetrahydrofolate + NADP(+) = (6R)-5,10-methenyltetrahydrofolate + NADPH. It catalyses the reaction (6R)-5,10-methenyltetrahydrofolate + H2O = (6R)-10-formyltetrahydrofolate + H(+). The protein operates within one-carbon metabolism; tetrahydrofolate interconversion. Catalyzes the oxidation of 5,10-methylenetetrahydrofolate to 5,10-methenyltetrahydrofolate and then the hydrolysis of 5,10-methenyltetrahydrofolate to 10-formyltetrahydrofolate. The sequence is that of Bifunctional protein FolD from Sulfurimonas denitrificans (strain ATCC 33889 / DSM 1251) (Thiomicrospira denitrificans (strain ATCC 33889 / DSM 1251)).